Reading from the N-terminus, the 284-residue chain is Tegument protein VP22 (284 aa).

Disordered stretches follow at residues 1-126 (MSYY…WSID) and 239-284 (LYAS…SRRR). A compositionally biased stretch (basic and acidic residues) spans 74–83 (SRDDDDRRQP). Residues 94–108 (ERRKSQTTVTTRRKT) show a composition bias toward basic residues. Positions 115–126 (KSSNSNGPWSID) are enriched in polar residues.

This sequence belongs to the alphaherpesvirinae VP22 tegument protein family. As to quaternary structure, interacts with gE (via C-terminus); this interaction is necessary for the recruitment of VP22 to the Golgi and its packaging into virions. Interacts with gM (via C-terminus). Interacts with VP16; this interaction allows the formation of a tripartite complex composed of VP16, VP22 and UL41/VHS. Interacts with the capsid-binding protein UL16. Interacts with host CGAS. Highly phosphorylated in the host cell. Packaging is selective for underphosphorylated forms.

Its subcellular location is the virion tegument. It is found in the host cytoplasm. The protein resides in the host nucleus. It localises to the host Golgi apparatus. Tegument protein that plays different roles during the time course of infection. Participates in both the accumulation of viral mRNAs and viral protein translation at late time of infection. Modulates the RNase activity of the virion host shutoff protein UL41 probably to ensure necessary levels of key cellular mRNAs and proteins. Plays a role in microtubule reorganization that occurs after viral infection by stabilizing microtubule network. Plays a role in the inhibition of host innate immune system by targeting the CGAS enzymatic activity which is the principal cytosolic DNA sensor that detects invading viral DNA. Acts by mediating disruption of liquid-like droplets in which CGAS is activated, thereby preventing CGAS activity. The protein is Tegument protein VP22 (UL49) of Amazona oratrix (yellow-headed parrot).